Reading from the N-terminus, the 714-residue chain is Fatty acid oxidation complex subunit alpha (714 aa).

Positions 1–190 (MEMASAFTLN…KLGLVDDVVP (190 aa)) are enoyl-CoA hydratase. Positions 306-714 (APLNSVGILG…FWKTTATDLQ (409 aa)) are 3-hydroxyacyl-CoA dehydrogenase.

The protein in the N-terminal section; belongs to the enoyl-CoA hydratase/isomerase family. In the central section; belongs to the 3-hydroxyacyl-CoA dehydrogenase family. Heterotetramer of two alpha chains (FadJ) and two beta chains (FadI).

It localises to the cytoplasm. The enzyme catalyses a (3S)-3-hydroxyacyl-CoA = a (2E)-enoyl-CoA + H2O. The catalysed reaction is a 4-saturated-(3S)-3-hydroxyacyl-CoA = a (3E)-enoyl-CoA + H2O. It carries out the reaction a (3S)-3-hydroxyacyl-CoA + NAD(+) = a 3-oxoacyl-CoA + NADH + H(+). It catalyses the reaction (3S)-3-hydroxybutanoyl-CoA = (3R)-3-hydroxybutanoyl-CoA. It participates in lipid metabolism; fatty acid beta-oxidation. Catalyzes the formation of a hydroxyacyl-CoA by addition of water on enoyl-CoA. Also exhibits 3-hydroxyacyl-CoA epimerase and 3-hydroxyacyl-CoA dehydrogenase activities. The protein is Fatty acid oxidation complex subunit alpha of Shigella boydii serotype 18 (strain CDC 3083-94 / BS512).